The following is a 165-amino-acid chain: Large ribosomal subunit protein uL11 (165 aa).

The residue at position 38 (Ser-38) is a Phosphoserine. Residue Lys-40 forms a Glycyl lysine isopeptide (Lys-Gly) (interchain with G-Cter in SUMO2) linkage. Lys-48 is covalently cross-linked (Glycyl lysine isopeptide (Lys-Gly) (interchain with G-Cter in ubiquitin)). Position 54 is an N6-acetyllysine (Lys-54). Lys-83 participates in a covalent cross-link: Glycyl lysine isopeptide (Lys-Gly) (interchain with G-Cter in ubiquitin). Ser-165 carries the phosphoserine modification.

Belongs to the universal ribosomal protein uL11 family. As to quaternary structure, component of the large ribosomal subunit. Mature ribosomes consist of a small (40S) and a large (60S) subunit. The 40S subunit contains about 33 different proteins and 1 molecule of RNA (18S). The 60S subunit contains about 49 different proteins and 3 molecules of RNA (28S, 5.8S and 5S). Ubiquitinated at Lys-48 and Lys-83 by RNF14 and RNF25 in response to ribosome collisions (ribosome stalling).

The protein localises to the cytoplasm. In terms of biological role, component of the large ribosomal subunit. The ribosome is a large ribonucleoprotein complex responsible for the synthesis of proteins in the cell. Binds directly to 26S ribosomal RNA. This chain is Large ribosomal subunit protein uL11 (RPL12), found in Bos taurus (Bovine).